A 406-amino-acid chain; its full sequence is uncharacterized protein (406 aa).

This sequence to S.pombe SpAC12C2.04.

The protein localises to the cytoplasm. The protein resides in the nucleus. This is an uncharacterized protein from Schizosaccharomyces pombe (strain 972 / ATCC 24843) (Fission yeast).